A 209-amino-acid chain; its full sequence is Probable septum site-determining protein MinC (209 aa).

Belongs to the MinC family. In terms of assembly, interacts with MinD and FtsZ.

Cell division inhibitor that blocks the formation of polar Z ring septums. Rapidly oscillates between the poles of the cell to destabilize FtsZ filaments that have formed before they mature into polar Z rings. Prevents FtsZ polymerization. The chain is Probable septum site-determining protein MinC from Clostridium kluyveri (strain NBRC 12016).